Reading from the N-terminus, the 249-residue chain is Phosphate import ATP-binding protein PstB 2 (249 aa).

Residues I4–I244 form the ABC transporter domain. ATP is bound at residue G36–S43.

The protein belongs to the ABC transporter superfamily. Phosphate importer (TC 3.A.1.7) family. As to quaternary structure, the complex is composed of two ATP-binding proteins (PstB), two transmembrane proteins (PstC and PstA) and a solute-binding protein (PstS).

It localises to the cell membrane. It catalyses the reaction phosphate(out) + ATP + H2O = ADP + 2 phosphate(in) + H(+). Part of the ABC transporter complex PstSACB involved in phosphate import. Responsible for energy coupling to the transport system. This is Phosphate import ATP-binding protein PstB 2 from Caldanaerobacter subterraneus subsp. tengcongensis (strain DSM 15242 / JCM 11007 / NBRC 100824 / MB4) (Thermoanaerobacter tengcongensis).